Consider the following 257-residue polypeptide: Methylthioribulose-1-phosphate dehydratase (257 aa).

Positions 1 to 33 are disordered; sequence MVSSQEKMASISDIIQKDEDSGSEKTESQDKEH. Over residues 15–33 the composition is skewed to basic and acidic residues; sequence IQKDEDSGSEKTESQDKEH. Position 107 (C107) interacts with substrate. Zn(2+)-binding residues include H125 and H127. The Proton donor/acceptor role is filled by E149. Residue H205 coordinates Zn(2+).

Belongs to the aldolase class II family. MtnB subfamily. Zn(2+) is required as a cofactor.

It localises to the cytoplasm. It catalyses the reaction 5-(methylsulfanyl)-D-ribulose 1-phosphate = 5-methylsulfanyl-2,3-dioxopentyl phosphate + H2O. It functions in the pathway amino-acid biosynthesis; L-methionine biosynthesis via salvage pathway; L-methionine from S-methyl-5-thio-alpha-D-ribose 1-phosphate: step 2/6. In terms of biological role, catalyzes the dehydration of methylthioribulose-1-phosphate (MTRu-1-P) into 2,3-diketo-5-methylthiopentyl-1-phosphate (DK-MTP-1-P). Functions in the methionine salvage pathway. May play a role in apoptosis. This Esox lucius (Northern pike) protein is Methylthioribulose-1-phosphate dehydratase.